Consider the following 516-residue polypeptide: Putative fatty acyl-CoA reductase CG8306 (516 aa).

Transmembrane regions (helical) follow at residues tryptophan 356–valine 376, isoleucine 471–isoleucine 491, and glycine 496–leucine 516.

The protein belongs to the fatty acyl-CoA reductase family.

The protein localises to the membrane. The enzyme catalyses a long-chain fatty acyl-CoA + 2 NADPH + 2 H(+) = a long-chain primary fatty alcohol + 2 NADP(+) + CoA. Catalyzes the reduction of C16 or C18 fatty acyl-CoA to fatty alcohols. This is Putative fatty acyl-CoA reductase CG8306 from Drosophila melanogaster (Fruit fly).